The sequence spans 428 residues: UPF0053 inner membrane protein YfjD (428 aa).

Residues 1 to 3 (MEH) are Cytoplasmic-facing. Residues 2 to 192 (EHISTTTLII…SQISRRNQDM (191 aa)) form the CNNM transmembrane domain. Residues 4–24 (ISTTTLIIILIIMVVISAYFS) form a helical membrane-spanning segment. The Periplasmic segment spans residues 25–64 (GSETGMMTLNRYRLRHMAKQGNRSAKRVEKLLRKPDRLIS). The chain crosses the membrane as a helical span at residues 65–85 (LVLIGNNLVNILASALGTIVG). Residues 86-91 (MRLYGD) lie on the Cytoplasmic side of the membrane. A helical membrane pass occupies residues 92–112 (AGVAIATGVLTFVVLVFAEVL). Topologically, residues 113–129 (PKTIAALYPEKVAYPSS) are periplasmic. The chain crosses the membrane as a helical span at residues 130–150 (FLLAPLQILMMPLVWLLNAIT). The Cytoplasmic portion of the chain corresponds to 151–428 (RMLMRMMGIK…VKPLRESVAE (278 aa)). CBS domains are found at residues 208-270 (MVPR…FTKE) and 272-332 (MLRA…FTTS).

This sequence belongs to the UPF0053 family.

The protein resides in the cell inner membrane. The protein is UPF0053 inner membrane protein YfjD (yfjD) of Escherichia coli (strain K12).